Consider the following 231-residue polypeptide: RNA pyrophosphohydrolase (231 aa).

A Nudix hydrolase domain is found at 6–149 (GFRPNVGIIL…KRDVYQLALT (144 aa)). A Nudix box motif is present at residues 38-59 (GGIKYGETPEQAMYRELHEEIG). The disordered stretch occupies residues 168–200 (VHHGRHGSGQRYAQQPGQPPTLAQRRPLQPVTQ).

This sequence belongs to the Nudix hydrolase family. RppH subfamily. Requires a divalent metal cation as cofactor.

Functionally, accelerates the degradation of transcripts by removing pyrophosphate from the 5'-end of triphosphorylated RNA, leading to a more labile monophosphorylated state that can stimulate subsequent ribonuclease cleavage. This chain is RNA pyrophosphohydrolase, found in Cupriavidus pinatubonensis (strain JMP 134 / LMG 1197) (Cupriavidus necator (strain JMP 134)).